The chain runs to 120 residues: Large ribosomal subunit protein bL12 (120 aa).

It belongs to the bacterial ribosomal protein bL12 family. Homodimer. Part of the ribosomal stalk of the 50S ribosomal subunit. Forms a multimeric L10(L12)X complex, where L10 forms an elongated spine to which 2 to 4 L12 dimers bind in a sequential fashion. Binds GTP-bound translation factors.

Functionally, forms part of the ribosomal stalk which helps the ribosome interact with GTP-bound translation factors. Is thus essential for accurate translation. The polypeptide is Large ribosomal subunit protein bL12 (Listeria welshimeri serovar 6b (strain ATCC 35897 / DSM 20650 / CCUG 15529 / CIP 8149 / NCTC 11857 / SLCC 5334 / V8)).